The primary structure comprises 262 residues: 5'-nucleotidase SurE (262 aa).

Aspartate 8, aspartate 9, serine 39, and asparagine 95 together coordinate a divalent metal cation.

Belongs to the SurE nucleotidase family. The cofactor is a divalent metal cation.

The protein localises to the cytoplasm. The catalysed reaction is a ribonucleoside 5'-phosphate + H2O = a ribonucleoside + phosphate. In terms of biological role, nucleotidase that shows phosphatase activity on nucleoside 5'-monophosphates. In Methanothermobacter thermautotrophicus (strain ATCC 29096 / DSM 1053 / JCM 10044 / NBRC 100330 / Delta H) (Methanobacterium thermoautotrophicum), this protein is 5'-nucleotidase SurE.